A 196-amino-acid chain; its full sequence is UPF0340 protein TTHA0583 (196 aa).

Belongs to the UPF0340 family.

This chain is UPF0340 protein TTHA0583, found in Thermus thermophilus (strain ATCC 27634 / DSM 579 / HB8).